The following is a 518-amino-acid chain: Sensor protein kinase HptS (518 aa).

2 helical membrane-spanning segments follow: residues 20 to 40 (IFPV…IYIW) and 222 to 242 (GITL…FGFI). The Histidine kinase domain occupies 297–513 (EQLIHSIEHT…LICYKIPLSR (217 aa)). Position 325 is a phosphohistidine; by autocatalysis (histidine 325).

In terms of processing, autophosphorylated.

Its subcellular location is the cell membrane. It catalyses the reaction ATP + protein L-histidine = ADP + protein N-phospho-L-histidine.. Functionally, member of the two-component regulatory system HptS/HptR that regulates genes involved in hexose phosphate transport system in response to changes in extracellular phosphate sources. May act as a sensor protein kinase which is autophosphorylated at a histidine residue and transfers its phosphate group to the conserved aspartic acid residue in the regulatory domain of HptS. In turn, HptS antagonizes CcpA-dependent transcription of a subset of CcpA-regulated genes involved in antibiotic susceptibility. This is Sensor protein kinase HptS (hptS) from Staphylococcus aureus (strain Mu50 / ATCC 700699).